The following is a 206-amino-acid chain: GTP cyclohydrolase 1 (206 aa).

Zn(2+) is bound by residues cysteine 97, histidine 100, and cysteine 168.

The protein belongs to the GTP cyclohydrolase I family. As to quaternary structure, toroid-shaped homodecamer, composed of two pentamers of five dimers.

The enzyme catalyses GTP + H2O = 7,8-dihydroneopterin 3'-triphosphate + formate + H(+). The protein operates within cofactor biosynthesis; 7,8-dihydroneopterin triphosphate biosynthesis; 7,8-dihydroneopterin triphosphate from GTP: step 1/1. The polypeptide is GTP cyclohydrolase 1 (Chromobacterium violaceum (strain ATCC 12472 / DSM 30191 / JCM 1249 / CCUG 213 / NBRC 12614 / NCIMB 9131 / NCTC 9757 / MK)).